Reading from the N-terminus, the 182-residue chain is RNA chaperone ProQ (182 aa).

The interval 125–160 (EQRKEQRKDFFKKKAREERNAKTMNKAVKKGSPKKD) is disordered.

Belongs to the ProQ family.

It is found in the cytoplasm. Its function is as follows. RNA chaperone with significant RNA binding, RNA strand exchange and RNA duplexing activities. The protein is RNA chaperone ProQ of Haemophilus ducreyi (strain 35000HP / ATCC 700724).